The chain runs to 62 residues: Ferredoxin-3 (62 aa).

4Fe-4S ferredoxin-type domains lie at 2–28 and 29–62; these read SLKI…SAGS and DIYV…IVKA. Residues cysteine 9, cysteine 12, cysteine 15, cysteine 19, cysteine 38, cysteine 41, cysteine 50, and cysteine 54 each contribute to the [4Fe-4S] cluster site.

Requires [4Fe-4S] cluster as cofactor.

Functionally, ferredoxins are iron-sulfur proteins that transfer electrons in a wide variety of metabolic reactions. This chain is Ferredoxin-3, found in Chlorobaculum tepidum (strain ATCC 49652 / DSM 12025 / NBRC 103806 / TLS) (Chlorobium tepidum).